A 217-amino-acid polypeptide reads, in one-letter code: Small ribosomal subunit protein uS2 (217 aa).

This sequence belongs to the universal ribosomal protein uS2 family.

The protein is Small ribosomal subunit protein uS2 of Korarchaeum cryptofilum (strain OPF8).